The sequence spans 1322 residues: WD repeat-containing protein 17 (1322 aa).

WD repeat units lie at residues 81–121 (EHKK…VIAK), 123–164 (DSTK…SGVI), 171–211 (SFLS…QKHV), 221–261 (DEED…CITT), and 266–307 (SAAA…PIDN). A disordered region spans residues 328–352 (KFSVQSPTKNHYTSSTSEAVPPPTL). Positions 330-345 (SVQSPTKNHYTSSTSE) are enriched in polar residues. 7 WD repeats span residues 391–431 (GHVE…AVYT), 434–474 (GNEG…IIQR), 478–518 (HGTN…LHKY), 519–559 (KHPA…DQPL), 564–604 (GHTA…CINI), 607–647 (GHTA…CVDT), and 650–690 (DHGA…TPVQ).

In Homo sapiens (Human), this protein is WD repeat-containing protein 17 (WDR17).